Consider the following 171-residue polypeptide: Peptide deformylase (171 aa).

The Fe cation site is built by Cys-91 and His-133. The active site involves Glu-134. His-137 contributes to the Fe cation binding site.

Belongs to the polypeptide deformylase family. The cofactor is Fe(2+).

The enzyme catalyses N-terminal N-formyl-L-methionyl-[peptide] + H2O = N-terminal L-methionyl-[peptide] + formate. Its function is as follows. Removes the formyl group from the N-terminal Met of newly synthesized proteins. Requires at least a dipeptide for an efficient rate of reaction. N-terminal L-methionine is a prerequisite for activity but the enzyme has broad specificity at other positions. The protein is Peptide deformylase of Cronobacter sakazakii (strain ATCC BAA-894) (Enterobacter sakazakii).